The primary structure comprises 347 residues: Protein RecA (347 aa).

Residue 65–72 (GPESSGKT) coordinates ATP. Positions 327–336 (KFEPTELSRE) are enriched in basic and acidic residues. A disordered region spans residues 327-347 (KFEPTELSREEGDEDTLEDTM). The segment covering 337-347 (EGDEDTLEDTM) has biased composition (acidic residues).

The protein belongs to the RecA family.

It is found in the cytoplasm. Its function is as follows. Can catalyze the hydrolysis of ATP in the presence of single-stranded DNA, the ATP-dependent uptake of single-stranded DNA by duplex DNA, and the ATP-dependent hybridization of homologous single-stranded DNAs. It interacts with LexA causing its activation and leading to its autocatalytic cleavage. The protein is Protein RecA of Xylella fastidiosa (strain 9a5c).